The chain runs to 210 residues: Meiotic coiled-coil protein 7 (210 aa).

The stretch at 77–148 (KRSRESVLGS…LKTQLSNLNH (72 aa)) forms a coiled coil.

This sequence belongs to the MND1 family. In terms of assembly, interacts with meu13.

The protein localises to the cytoplasm. It localises to the nucleus. Functionally, required for meiotic recombination. This Schizosaccharomyces pombe (strain 972 / ATCC 24843) (Fission yeast) protein is Meiotic coiled-coil protein 7 (mcp7).